The sequence spans 329 residues: Glycerol-3-phosphate dehydrogenase [NAD(P)+] (329 aa).

The NADPH site is built by W15, H35, and K107. 3 residues coordinate sn-glycerol 3-phosphate: K107, G135, and S137. A139 is a binding site for NADPH. Sn-glycerol 3-phosphate contacts are provided by K190, D243, S253, R254, and N255. The Proton acceptor role is filled by K190. An NADPH-binding site is contributed by R254. The NADPH site is built by L276 and E278.

This sequence belongs to the NAD-dependent glycerol-3-phosphate dehydrogenase family.

It localises to the cytoplasm. It carries out the reaction sn-glycerol 3-phosphate + NAD(+) = dihydroxyacetone phosphate + NADH + H(+). The catalysed reaction is sn-glycerol 3-phosphate + NADP(+) = dihydroxyacetone phosphate + NADPH + H(+). It functions in the pathway membrane lipid metabolism; glycerophospholipid metabolism. Functionally, catalyzes the reduction of the glycolytic intermediate dihydroxyacetone phosphate (DHAP) to sn-glycerol 3-phosphate (G3P), the key precursor for phospholipid synthesis. The sequence is that of Glycerol-3-phosphate dehydrogenase [NAD(P)+] from Rhodopseudomonas palustris (strain HaA2).